The chain runs to 192 residues: Interferon epsilon (192 aa).

A signal peptide spans 1–21 (MVHRQLPETVLLLLVSSTIFS). A disulfide bond links Cys-52 and Cys-162.

It belongs to the alpha/beta interferon family. Expressed at very high levels in uterus and, at much lower levels, in ovary and cervix. Very low levels, if any, in other organs. In the endometrium, expressed in the luminal and glandular epithelial cells (at protein level).

It is found in the secreted. Type I interferon required for maintaining basal levels of IFN-regulated genes, including 2'-5'-oligoadenylate synthetase, IRF7 and ISG15, in the female reproductive tract. Directly mediates protection against viral, including HSV-2, and bacterial, including Chlamydia muridarum, genital infections. In Mus musculus (Mouse), this protein is Interferon epsilon (Ifne).